Reading from the N-terminus, the 190-residue chain is Vespryn-21 (190 aa).

The signal sequence occupies residues 1-20 (MLLFTLCFFADLENGGKALA). The region spanning 21–127 (SPPGKWQKAD…LIWQRGLWFL (107 aa)) is the B30.2/SPRY domain. Residues 128–190 (QRLETDSDKL…LGGGVSLTNL (63 aa)) constitute a propeptide that is removed on maturation.

This sequence belongs to the ohanin/vespryn family. In terms of tissue distribution, expressed by the venom gland.

It localises to the secreted. Neurotoxin that produces dose-dependent hypolocomotion and hyperalgesia in mice. May directly act on the central nervous system, as it is 6500-fold more potent when administered intracerebroventricularly than intraperitoneal. The chain is Vespryn-21 from Drysdalia coronoides (White-lipped snake).